Reading from the N-terminus, the 290-residue chain is Lipoyl synthase (290 aa).

[4Fe-4S] cluster-binding residues include Cys44, Cys49, Cys55, Cys70, Cys74, Cys77, and Ser281. Positions 56-270 (WRCGTATFMI…KQIGLEKGFS (215 aa)) constitute a Radical SAM core domain.

The protein belongs to the radical SAM superfamily. Lipoyl synthase family. [4Fe-4S] cluster is required as a cofactor.

The protein resides in the cytoplasm. It carries out the reaction [[Fe-S] cluster scaffold protein carrying a second [4Fe-4S](2+) cluster] + N(6)-octanoyl-L-lysyl-[protein] + 2 oxidized [2Fe-2S]-[ferredoxin] + 2 S-adenosyl-L-methionine + 4 H(+) = [[Fe-S] cluster scaffold protein] + N(6)-[(R)-dihydrolipoyl]-L-lysyl-[protein] + 4 Fe(3+) + 2 hydrogen sulfide + 2 5'-deoxyadenosine + 2 L-methionine + 2 reduced [2Fe-2S]-[ferredoxin]. Its pathway is protein modification; protein lipoylation via endogenous pathway; protein N(6)-(lipoyl)lysine from octanoyl-[acyl-carrier-protein]: step 2/2. Functionally, catalyzes the radical-mediated insertion of two sulfur atoms into the C-6 and C-8 positions of the octanoyl moiety bound to the lipoyl domains of lipoate-dependent enzymes, thereby converting the octanoylated domains into lipoylated derivatives. This chain is Lipoyl synthase, found in Treponema denticola (strain ATCC 35405 / DSM 14222 / CIP 103919 / JCM 8153 / KCTC 15104).